The sequence spans 114 residues: Large ribosomal subunit protein bL20c (114 aa).

The protein belongs to the bacterial ribosomal protein bL20 family.

It localises to the plastid. The protein resides in the chloroplast. In terms of biological role, binds directly to 23S ribosomal RNA and is necessary for the in vitro assembly process of the 50S ribosomal subunit. It is not involved in the protein synthesizing functions of that subunit. This Trieres chinensis (Marine centric diatom) protein is Large ribosomal subunit protein bL20c (rpl20).